The following is a 243-amino-acid chain: MTCSRRDMSLSFGSAVGAYERGRPSYPPEAIDWLLPAAARRVLDLGAGTGKLTTRLVERGLDVVAVDPIPEMLDVLRAALPQTVALLGTAEEIPLDDNSVDAVLVAQAWHWVDPARAIPEVARVLRPGGRLGLVWNTRDERLGWVRELGEIIGRDGDPVRDRVTLPEPFTTVQRHQVEWTNYLTPQALIDLVASRSYCITSPAQVRTKTLDRVRQLLATHPALANSNGLALPYVTVCVRATLA.

The protein belongs to the methyltransferase superfamily.

This is an uncharacterized protein from Mycobacterium tuberculosis (strain CDC 1551 / Oshkosh).